Consider the following 835-residue polypeptide: MPPRAPRPAGAVSPPFPPLAGPPLKARAPRARDSPLTSPCRAHAAMASVVAPAASSSAAAPGADAFLDAACPEDVARALAAELEALRALGHDVGAPAPGASRREAALFITRAVDGLKAFSRVDERVYVACGKLVHLRVRSREADLDAWLASPELALIPAVAAAVRRHRARVEAALRWFWREAYPALYARGLQSALKYEEMYLARLEHGRCEAMDQFFVRLAAAAATATRRPMALVLCGSDAWPEVFDAYFRALATQAIVPATPLMLFAGRARGSLASCYLLNPLPRTTEEAVRAITDEVAPILLRRGGVGLSLQSFNRTPSGDCTRGIMAVLKALDSMTAAINSDSERPTGVCVYVEPWHADVRAVLNMRGMLAADESLRCDNIFSCLWTPDLFFQRYQRHLDGERAVKWTLFDDRASHLASLHGPDFAREYERLERLGLGVESLPIQDMAFLIVRSAVMTGSPFLMMKDACNRHFHTDTRGAALATSNLCTEIVQRATPGENGVCNLASVNLPACLAGGAFDFAALRRAARVAAVFVNAMMRIGNYPTGASVEGVRRSRSLGIGLQGLHTTVLALDMDMADPAARRLNAAIAEELLYGVMDASVELCERGLRPFDGFEHSRYARGVMPFDAYERVSLREPMRWDALRVRIAEHGVYNAQFVALMPTVSSSQVTESSEGFSPTFTNMFSKVTISGELLRPNLPLMETLRRLFPRECARRDAVARLERAQWSVAAAFGELPAGHPLAKFKTAFEYDQELLIDMCADRAPFVDHSQSMSLFLTEPADGKLHASRVMGLLMRAYNLGLKTGMYYCKIRKATNNGVFTGGDLVCTSCHL.

A disordered region spans residues 1–39 (MPPRAPRPAGAVSPPFPPLAGPPLKARAPRARDSPLTSP). Substrate contacts are provided by residues Thr262, 277-278 (SC), Gly308, 489-493 (NLCTE), and 666-670 (PTVSS). Cys278 and Cys506 form a disulfide bridge. The active-site Proton acceptor is Asn489. Cys491 serves as the catalytic Cysteine radical intermediate. The Proton acceptor role is filled by Glu493.

This sequence belongs to the ribonucleoside diphosphate reductase large chain family. Heterotetramer composed of a homodimer of the large subunit (R1) and a homodimer of the small subunit (R2). Larger multisubunit protein complex are also active, composed of (R1)n(R2)n.

It catalyses the reaction a 2'-deoxyribonucleoside 5'-diphosphate + [thioredoxin]-disulfide + H2O = a ribonucleoside 5'-diphosphate + [thioredoxin]-dithiol. Its function is as follows. Ribonucleoside-diphosphate reductase holoenzyme provides the precursors necessary for viral DNA synthesis. Allows virus growth in non-dividing cells, as well as reactivation from latency in infected hosts. Catalyzes the biosynthesis of deoxyribonucleotides from the corresponding ribonucleotides. In Suid herpesvirus 1 (strain Kaplan) (SuHV-1), this protein is Ribonucleoside-diphosphate reductase large subunit.